A 717-amino-acid polypeptide reads, in one-letter code: DNA ligase (717 aa).

NAD(+) is bound by residues 44–48, 93–94, and Glu-127; these read DADYD and SL. Lys-129 (N6-AMP-lysine intermediate) is an active-site residue. Arg-150, Glu-186, Lys-302, and Lys-326 together coordinate NAD(+). Zn(2+) is bound by residues Cys-431, Cys-434, Cys-455, and Cys-461. The BRCT domain maps to 639-717; that stretch reads ATDSPVAGKT…EDEWLALIGG (79 aa).

It belongs to the NAD-dependent DNA ligase family. LigA subfamily. Mg(2+) serves as cofactor. Mn(2+) is required as a cofactor.

It carries out the reaction NAD(+) + (deoxyribonucleotide)n-3'-hydroxyl + 5'-phospho-(deoxyribonucleotide)m = (deoxyribonucleotide)n+m + AMP + beta-nicotinamide D-nucleotide.. Its function is as follows. DNA ligase that catalyzes the formation of phosphodiester linkages between 5'-phosphoryl and 3'-hydroxyl groups in double-stranded DNA using NAD as a coenzyme and as the energy source for the reaction. It is essential for DNA replication and repair of damaged DNA. This chain is DNA ligase, found in Sinorhizobium medicae (strain WSM419) (Ensifer medicae).